The chain runs to 166 residues: PTS system glucose-specific EIIA component (166 aa).

The 105-residue stretch at 34–138 (DPVFAQKMMG…SIISPIIITN (105 aa)) folds into the PTS EIIA type-1 domain. Positions 71 and 86 each coordinate Zn(2+). His86 serves as the catalytic Tele-phosphohistidine intermediate; for EIIA activity. Phosphohistidine; by HPr is present on His86.

As to quaternary structure, heterodimer with glycerol kinase (glpk). Zn(2+) serves as cofactor.

It is found in the cytoplasm. The phosphoenolpyruvate-dependent sugar phosphotransferase system (sugar PTS), a major carbohydrate active transport system, catalyzes the phosphorylation of incoming sugar substrates concomitantly with their translocation across the cell membrane. The enzyme II complex composed of PtsG and Crr is involved in glucose transport. In Staphylococcus epidermidis (strain ATCC 35984 / DSM 28319 / BCRC 17069 / CCUG 31568 / BM 3577 / RP62A), this protein is PTS system glucose-specific EIIA component (crr).